The sequence spans 107 residues: uncharacterized protein (107 aa).

Its subcellular location is the mitochondrion. This is an uncharacterized protein from Arabidopsis thaliana (Mouse-ear cress).